Consider the following 163-residue polypeptide: uncharacterized protein (163 aa).

This is an uncharacterized protein from Haemophilus phage HP1 (strain HP1c1) (Bacteriophage HP1).